Consider the following 30-residue polypeptide: Matrix Gla protein (30 aa).

Phosphoserine occurs at positions 2, 3, and 5.

It belongs to the osteocalcin/matrix Gla protein family. In terms of processing, requires vitamin K-dependent gamma-carboxylation for its function.

Its subcellular location is the secreted. In terms of biological role, associates with the organic matrix of calcified cartilage. In Prionace glauca (Blue shark), this protein is Matrix Gla protein (mgp).